A 187-amino-acid polypeptide reads, in one-letter code: Putative glutathione-dependent formaldehyde-activating enzyme (187 aa).

One can recognise a CENP-V/GFA domain in the interval 20 to 166; the sequence is FPGGKLYCHC…FESVGLKTYD (147 aa). The Zn(2+) site is built by Cys27, Cys29, Cys48, Cys50, Cys53, Cys95, and Cys98.

The protein belongs to the Gfa family. It depends on Zn(2+) as a cofactor.

The catalysed reaction is S-(hydroxymethyl)glutathione = glutathione + formaldehyde. It functions in the pathway one-carbon metabolism; formaldehyde degradation; formate from formaldehyde (glutathione route): step 1/3. In terms of biological role, catalyzes the condensation of formaldehyde and glutathione to S-hydroxymethylglutathione. In Talaromyces marneffei (strain ATCC 18224 / CBS 334.59 / QM 7333) (Penicillium marneffei), this protein is Putative glutathione-dependent formaldehyde-activating enzyme.